Here is a 339-residue protein sequence, read N- to C-terminus: Geranylgeranyl transferase type-2 subunit beta (339 aa).

A Phosphothreonine modification is found at threonine 11. PFTB repeat units lie at residues 28–69 (LEKH…DLMG), 76–117 (REEI…TLYD), 124–165 (VDKV…ALLG), 172–213 (VEKA…AITS), 220–261 (SDLL…KIIG), and 268–310 (REKL…SLLG). Geranylgeranyl diphosphate-binding positions include 198–200 (HAG) and 240–243 (RPEK). Aspartate 246 and cysteine 248 together coordinate Zn(2+). Geranylgeranyl diphosphate contacts are provided by residues tyrosine 249 and 249–252 (YSWW). Histidine 298 provides a ligand contact to Zn(2+).

It belongs to the protein prenyltransferase subunit beta family. Heterotrimer composed of RABGGTA, RABGGTB and CHM; within this trimer, RABGGTA and RABGGTB form the catalytic component B, while CHM (component A) mediates peptide substrate binding. The Rab GGTase dimer (RGGT) interacts with CHM (component A) prior to Rab protein binding; the association is stabilized by geranylgeranyl pyrophosphate (GGpp). The CHM:RGGT:Rab complex is destabilized by GGpp. Interaction of RABGGTB with prenylated PTP4A2 precludes its association with RABGGTA and inhibits enzyme activity. Interacts with CHODL. Interacts with non-phosphorylated form of RAB8A; phosphorylation of RAB8A at 'Thr-72' disrupts this interaction. Requires Zn(2+) as cofactor. As to expression, ubiquitous. Detected in all the major organs in adult animals.

The enzyme catalyses geranylgeranyl diphosphate + L-cysteinyl-[protein] = S-geranylgeranyl-L-cysteinyl-[protein] + diphosphate. The enzymatic reaction requires the aid of a Rab escort protein (also called component A), such as CHM. Its function is as follows. Catalyzes the transfer of a geranylgeranyl moiety from geranylgeranyl diphosphate to both cysteines of Rab proteins with the C-terminal sequence -XXCC, -XCXC and -CCXX, such as RAB1A, RAB3A, RAB5A and RAB7A. This chain is Geranylgeranyl transferase type-2 subunit beta (Rabggtb), found in Mus musculus (Mouse).